A 413-amino-acid polypeptide reads, in one-letter code: Putative ankyrin repeat protein L92 (413 aa).

8 ANK repeats span residues 1–28 (MCACKFATYNSNIGAVKLLLDKGADINC), 32–67 (DGMSALSAVCKNLDLEFRSDFDTIKLLIERGADVNL), 68–104 (TVDGHYTPLMWLIKNLSENDDRFSESKISSIKNLFES), 105–134 (DDDDYFFENKRKNKYNALKLLLDNGANIEA), 137–170 (DGETPLLLACKLSSEITSTKHIKILLKKGAKTNI), 174–208 (DRKTPLMLLCKNCQQYLENEAVDVLIKYGKANINY), 212–242 (IGETALIYLCRISFMSESVQFLLEKGANPNI), and 246–275 (SGNTALHYAVKRHEFEMVEILLRYNASPEI).

The polypeptide is Putative ankyrin repeat protein L92 (Acanthamoeba polyphaga mimivirus (APMV)).